A 345-amino-acid polypeptide reads, in one-letter code: UDP-N-acetylenolpyruvoylglucosamine reductase (345 aa).

An FAD-binding PCMH-type domain is found at 59–254 (VGGPAACLAR…RKATQPLGRP (196 aa)). Arg209 is an active-site residue. The active-site Proton donor is Cys258. Residue Glu328 is part of the active site.

It belongs to the MurB family. FAD serves as cofactor.

Its subcellular location is the cytoplasm. It carries out the reaction UDP-N-acetyl-alpha-D-muramate + NADP(+) = UDP-N-acetyl-3-O-(1-carboxyvinyl)-alpha-D-glucosamine + NADPH + H(+). The protein operates within cell wall biogenesis; peptidoglycan biosynthesis. In terms of biological role, cell wall formation. The chain is UDP-N-acetylenolpyruvoylglucosamine reductase from Syntrophobacter fumaroxidans (strain DSM 10017 / MPOB).